The primary structure comprises 51 residues: Astexin-1 (51 aa).

Positions 1-28 are excised as a propeptide; that stretch reads MHTPIISETVQPKTAGLIVLGKASAETR. A cross-link (isoaspartyl glycine isopeptide (Gly-Asp)) is located at residues 29–37; sequence GLSQGVEPD.

In terms of processing, this lasso peptide is probably hydrolyzed to a linear form by the isopeptidase AtxE1, in vivo.

In terms of biological role, shows weak antimicrobial activity against its phylogenetic relative Caulobacter crescentus. Does not show activity against other bacteria tested (E.coli, Vibrio sp, Burkhoderia thailandensis, and Salmonella newport). The protein is Astexin-1 of Asticcacaulis excentricus (strain ATCC 15261 / DSM 4724 / KCTC 12464 / NCIMB 9791 / VKM B-1370 / CB 48).